Reading from the N-terminus, the 177-residue chain is Protein LIGHT-DEPENDENT SHORT HYPOCOTYLS 10 (177 aa).

Residues 1–10 (MSSPRERGKS) are compositionally biased toward basic and acidic residues. Disordered regions lie at residues 1 to 31 (MSSPRERGKSLMESSGSEPPVTPSRYESQKR) and 144 to 177 (RGIPYKKKKKKKPTPEMGGGREDSSSSSSSFSFS). One can recognise an ALOG domain in the interval 25-152 (RYESQKRRDW…ARGIPYKKKK (128 aa)). The Nuclear localization signal signature appears at 150-154 (KKKKK). Over residues 168 to 177 (SSSSSSFSFS) the composition is skewed to low complexity.

It belongs to the plant homeotic and developmental regulators ALOG protein family.

It is found in the nucleus. Its function is as follows. Probable transcription regulator that acts as a developmental regulator by promoting cell growth in response to light. The chain is Protein LIGHT-DEPENDENT SHORT HYPOCOTYLS 10 (LSH10) from Arabidopsis thaliana (Mouse-ear cress).